Reading from the N-terminus, the 394-residue chain is Na(+)/H(+) antiporter NhaA 2 (394 aa).

A run of 11 helical transmembrane segments spans residues 13 to 33, 58 to 78, 93 to 113, 124 to 144, 153 to 173, 176 to 196, 208 to 228, 260 to 280, 291 to 311, 327 to 347, and 361 to 381; these read FGGV…NGFL, LILW…GLEL, IALP…IFWA, GWAI…MLLG, IFLL…IAIF, TKLS…LWVL, ILVT…ATIA, YFIL…GVQI, IFFG…YIFI, FYGV…VNSL, and LGIL…LLVF.

Belongs to the NhaA Na(+)/H(+) (TC 2.A.33) antiporter family.

The protein localises to the cell inner membrane. It carries out the reaction Na(+)(in) + 2 H(+)(out) = Na(+)(out) + 2 H(+)(in). Functionally, na(+)/H(+) antiporter that extrudes sodium in exchange for external protons. This is Na(+)/H(+) antiporter NhaA 2 from Campylobacter fetus subsp. fetus (strain 82-40).